The chain runs to 262 residues: Transcription factor Adf-1 (262 aa).

Positions 24–104 (NLIEAVKLNP…QMQFLVDSIR (81 aa)) form a DNA-binding region, MADF. In terms of domain architecture, BESS spans 217-256 (SAEDQSFGMVVTDMLNTLGVRQKAEAKVHIIKYLTDMQLL).

Post-translationally, O-glycosylated; contains N-acetylglucosamine side chains.

Its subcellular location is the nucleus. In terms of biological role, may play an important role not only in the regulation of Adh expression but also in the transcription of other genes. The protein is Transcription factor Adf-1 (Adf1) of Drosophila melanogaster (Fruit fly).